The following is a 576-amino-acid chain: (+)-alpha-terpineol synthase (576 aa).

Arg286, Asp323, Asp327, Arg466, and Asn469 together coordinate (2E)-geranyl diphosphate. Positions 323 and 327 each coordinate Mg(2+). Positions 323-327 (DDVYD) match the DDXXD motif motif. Residues Asn469, Thr473, and Glu477 each contribute to the Mg(2+) site.

This sequence belongs to the terpene synthase family. Tpsb subfamily. It depends on Mg(2+) as a cofactor. Requires Mn(2+) as cofactor.

It carries out the reaction (2E)-geranyl diphosphate + H2O = (R)-alpha-terpineol + diphosphate. In terms of biological role, monoterpene synthase producing mainly (+)-alpha-terpineol (44%) and (-)-limonene (33.6%) and lower amounts of (E)-geraniol (5.9%), linalool (5.0%), myrcene (3.4%), (-)-alpha-pinene (3.3%), (+)-sabinene (3.0%) and alpha-terpinolene (1.6%). This Santalum album (White sandalwood) protein is (+)-alpha-terpineol synthase.